A 699-amino-acid chain; its full sequence is Zinc finger protein 782 (699 aa).

A KRAB domain is found at 8–79 (VSFQDVTVEF…EKEKGFLSRN (72 aa)). Residues 75–95 (FLSRNSPEDSQPDEISEKSPE) form a disordered region. The C2H2-type 1; degenerate zinc finger occupies 279 to 307 (CFCRITHKTLTGGKSFSQKSHIREHHRVH). The segment at 316-332 (GKSFNRNSTLPVHQRTH) adopts a C2H2-type 2; degenerate zinc-finger fold. The C2H2-type 3; degenerate zinc finger occupies 337–360 (YSDYHPCTETFSYQSTFSVHQKVH). Residues 366-388 (YEYNECGKSCSMNSHLIWPQKSH) form a C2H2-type 4; degenerate zinc finger. 11 consecutive C2H2-type zinc fingers follow at residues 394 to 416 (YECP…QRTH), 422 to 444 (YKCD…QRTH), 450 to 472 (FECH…QRTH), 478 to 500 (FECN…RRTH), 506 to 528 (YKCD…HRTH), 534 to 556 (YKCN…HRIH), 562 to 584 (YKCN…HRTH), 590 to 612 (YQCE…QRTH), 618 to 640 (YECN…QRTH), 646 to 668 (YNCN…QRTH), and 674 to 696 (YKCD…QKAH).

The protein belongs to the krueppel C2H2-type zinc-finger protein family.

The protein resides in the nucleus. Its function is as follows. May be involved in transcriptional regulation. The chain is Zinc finger protein 782 (ZNF782) from Homo sapiens (Human).